The chain runs to 384 residues: V-type proton ATPase subunit C 2 (384 aa).

This sequence belongs to the V-ATPase C subunit family. As to quaternary structure, V-ATPase is a heteromultimeric enzyme made up of two complexes: the ATP-hydrolytic V1 complex and the proton translocation V0 complex. The V1 complex consists of three catalytic AB heterodimers that form a heterohexamer, three peripheral stalks each consisting of EG heterodimers, one central rotor including subunits D and F, and the regulatory subunits C and H. The proton translocation complex V0 consists of the proton transport subunit a, a ring of proteolipid subunits c9c'', rotary subunit d, subunits e and f, and the accessory subunits vah-19/Ac45 and vah-20/PRR.

Subunit of the V1 complex of vacuolar(H+)-ATPase (V-ATPase), a multisubunit enzyme composed of a peripheral complex (V1) that hydrolyzes ATP and a membrane integral complex (V0) that translocates protons. V-ATPase is responsible for acidifying and maintaining the pH of intracellular compartments and in some cell types, is targeted to the plasma membrane, where it is responsible for acidifying the extracellular environment. Subunit C is necessary for the assembly of the catalytic sector of the enzyme and is likely to have a specific function in its catalytic activity. The chain is V-type proton ATPase subunit C 2 (VATC) from Ascidia sydneiensis samea (Vanadium-rich ascidian).